Here is a 96-residue protein sequence, read N- to C-terminus: Maintenance of carboxysome distribution protein B (96 aa).

The span at 1-18 (MTNLEDKLSASIKTENKD) shows a compositional bias: basic and acidic residues. The segment at 1-96 (MTNLEDKLSA…STHPRRVWPD (96 aa)) is disordered. A compositionally biased stretch (low complexity) spans 59 to 74 (ARATTTKPAVSKSSKP).

As to quaternary structure, monomer, associates with McdA:DNA. Interacts with shell components of the carboxysome.

The protein localises to the carboxysome. McdA and McdB together mediate carboxysome positioning on the nucleoid and to prevent their aggregation in the cell. Undergoes liquid-liquid phase separation at pH 7.0 in the presence of crowders polyethylene glycol or Ficoll. McdA is an ATPase that forms dynamic gradients on the nucleoid in response to adapter protein McdB, which associates with carboxysomes. The interplay between McdA gradients on the nucleoid and McdB-bound carboxysomes result in the equal spacing of Cbs along the cell length. Stimulates the ATPase activity of McdA, causing McdA to be released from DNA. In terms of biological role, incorrect positioning (aggregation) of carboxysomes results in reduced CO(2) fixation by encapsulated form 1 ribulose-1,5-bisphosphate carboxylase (RuBisCO, cbbL/cbbS), which leads to slower growth. The chain is Maintenance of carboxysome distribution protein B from Halothiobacillus neapolitanus (strain ATCC 23641 / c2) (Thiobacillus neapolitanus).